Consider the following 800-residue polypeptide: MSEIIQDLSLEDVLGDRFGRYSKYIIQERALPDVRDGLKPVQRRILYAMYSSGNTHDKNFRKSAKTVGDVIGQYHPHGDSSVYEAMVRLSQDWKLRHVLIEMHGNNGSIDNDPPAAMRYTEAKLSLLAEELLRDINKETVSFIPNYDDTTLEPMVLPSRFPNLLVNGSTGISAGYATDIPPHNLAEVIQATLKYIDNPDITVNQLMKYIKGPDFPTGGIIQGIDGIKKAYESGKGRIIVRSKVEEETLRNGRKQLIITEIPYEVNKSSLVKRIDELRADKKVDGIVEVRDETDRTGLRIAIELKKDVNSESIKNYLYKNSDLQISYNFNMVAISDGRPKLMGIRQIIDSYLNHQIEVVANRTKFELDNAEKRMHIVEGLIKALSILDKVIELIRSSKNKRDAKENLIEVYEFTEEQAEAIVMLQLYRLTNTDIVALEGEHKELEALIKQLRHILDNHDALLNVIKEELNEIKKKFKSERLSLIEAEIEEIKIDKEVMVPSEEVILSMTRHGYIKRTSIRSFNASGVEDIGLKDGDSLLKHQEVNTQDTVLVFTNKGRYLFIPVHKLADIRWKELGQHVSQIVPIEEDEVVINVFNEKDFNTDAFYVFATQNGMIKKSTVPLFKTTRFNKPLIATKVKENDDLISVMRFEKDQLITVITNKGMSLTYNTSELSDTGLRAAGVKSINLKAEDFVVMTEGVSENDTILMATQRGSLKRISFKILQVAKRAQRGITLLKELKKNPHRIVAAHVVTGEHSQYTLYSKSNEEHGLINDIHKSEQYTNGSFIVDTDDFGEVIDMYIS.

In terms of domain architecture, Topo IIA-type catalytic spans 31 to 495; the sequence is LPDVRDGLKP…EIEEIKIDKE (465 aa). Y119 serves as the catalytic O-(5'-phospho-DNA)-tyrosine intermediate.

Belongs to the type II topoisomerase GyrA/ParC subunit family. ParC type 2 subfamily. Heterotetramer composed of ParC and ParE.

The protein localises to the cell membrane. It carries out the reaction ATP-dependent breakage, passage and rejoining of double-stranded DNA.. Topoisomerase IV is essential for chromosome segregation. It relaxes supercoiled DNA. Performs the decatenation events required during the replication of a circular DNA molecule. The polypeptide is DNA topoisomerase 4 subunit A (Staphylococcus aureus (strain NCTC 8325 / PS 47)).